A 460-amino-acid chain; its full sequence is Nuclear transport factor 2 (460 aa).

The region spanning 15-131 is the NTF2 domain; that stretch reads VGRAFVEQYY…YFVLNDVFRF (117 aa). 3 disordered regions span residues 207–226, 238–289, and 361–460; these read EPPT…GDAP, KSSP…VDVE, and RQAV…GGSS. Residues 293 to 370 form the RRM domain; it reads HSIYVRNLPF…RQAVVEEKKT (78 aa). Residues 373 to 382 show a composition bias toward gly residues; it reads RGGGNNGGSR. A compositionally biased stretch (low complexity) spans 383 to 394; the sequence is GRYFSGRGSFRN. Composition is skewed to gly residues over residues 399 to 416 and 450 to 460; these read GGRG…GGEF and GRGGARGGGSS.

In terms of assembly, interacts with MBD6.

It is found in the cytoplasm. Its subcellular location is the nucleus. Its function is as follows. Involved in RNA-directed DNA methylation (RdDM). This is Nuclear transport factor 2 from Arabidopsis thaliana (Mouse-ear cress).